We begin with the raw amino-acid sequence, 368 residues long: Decarboxylase yanB (368 aa).

Residues His-7, His-9, and His-159 each contribute to the Zn(2+) site. Asn-169 carries an N-linked (GlcNAc...) asparagine glycan. Asp-283 is a Zn(2+) binding site. Residues 339 to 359 (WGAFSACLLLPVGLSALYSVL) form a helical membrane-spanning segment.

This sequence belongs to the metallo-dependent hydrolases superfamily. ACMSD family.

It localises to the membrane. The enzyme catalyses 6-methylsalicylate + H(+) = 3-methylphenol + CO2. It functions in the pathway secondary metabolite biosynthesis; terpenoid biosynthesis. In terms of biological role, decarboxylase; part of the gene cluster that mediates the biosynthesis of yanuthone D, a fungal isoprenoid epoxycyclohexenone that acts as an antibiotic against fungi and bacteria. The first step of the pathway is the synthesis of 6-methylsalicylic acid (6-MSA) by the polyketide synthase yanA. 6-MSA is then converted to m-cresol by the decarboxylase yanB. The cytochrome P450 monooxygenase yanC then catalyzes the oxidation of m-cresol to toluquinol. Epoxidation of toluquinol is then performed by the short chain dehydrogenase yanD, with the help of yanE, and a further prenylation by yanG leads to 7-deacetoxyyanuthone A. The next step is the hydroxylation of C-22 of 7-deacetoxyyanuthone A by the cytochrome P450 monooxygenase yanH to yield 22-deacetylyanuthone A. O-Mevalon transferase yanI then attaches mevalon to the hydroxyl group of 22-deacetylyanuthone A to produce yanuthone E. Finally, the FAD-dependent monooxygenase yanF oxidizes the hydroxyl group at C15 of yanuthone E to form yanuthone D. Furthermore, several branching points in the pathway lead to the production of yanuthones F and G from 7-deacetoxyyanuthone A; yanuthones H and I from 22-deacetylyanuthone A; and yanuthone J from yanuthone E. The sequence is that of Decarboxylase yanB from Aspergillus niger (strain ATCC 1015 / CBS 113.46 / FGSC A1144 / LSHB Ac4 / NCTC 3858a / NRRL 328 / USDA 3528.7).